A 292-amino-acid polypeptide reads, in one-letter code: Phosphatidylglycerol--prolipoprotein diacylglyceryl transferase (292 aa).

Transmembrane regions (helical) follow at residues 21-41 (VSLHWYGLMYLVGFVFAMWLA), 60-80 (LLYAGFLGVFLGGRIGYVLFY), 98-118 (GGMSFHGGLIGVIVVMLVFAH), 124-144 (FFQVADFIAPLIPFGLGAGRL), 198-218 (SQLYELILEGVVLFIILNLFI), 225-245 (GAVSGLFLIGYGAFRIIVEFF), and 258-278 (ISMGQILSLPMILAGVIMMIW). A 1,2-diacyl-sn-glycero-3-phospho-(1'-sn-glycerol) is bound at residue Arg143.

It belongs to the Lgt family.

It is found in the cell inner membrane. It catalyses the reaction L-cysteinyl-[prolipoprotein] + a 1,2-diacyl-sn-glycero-3-phospho-(1'-sn-glycerol) = an S-1,2-diacyl-sn-glyceryl-L-cysteinyl-[prolipoprotein] + sn-glycerol 1-phosphate + H(+). It functions in the pathway protein modification; lipoprotein biosynthesis (diacylglyceryl transfer). Its function is as follows. Catalyzes the transfer of the diacylglyceryl group from phosphatidylglycerol to the sulfhydryl group of the N-terminal cysteine of a prolipoprotein, the first step in the formation of mature lipoproteins. The protein is Phosphatidylglycerol--prolipoprotein diacylglyceryl transferase of Erwinia tasmaniensis (strain DSM 17950 / CFBP 7177 / CIP 109463 / NCPPB 4357 / Et1/99).